We begin with the raw amino-acid sequence, 176 residues long: Large ribosomal subunit protein uL6 (176 aa).

Over residues 156-170 the composition is skewed to basic and acidic residues; sequence YKGKGVRYADEQVRR. The interval 156–176 is disordered; the sequence is YKGKGVRYADEQVRRKEAKKK.

Belongs to the universal ribosomal protein uL6 family. In terms of assembly, part of the 50S ribosomal subunit.

This protein binds to the 23S rRNA, and is important in its secondary structure. It is located near the subunit interface in the base of the L7/L12 stalk, and near the tRNA binding site of the peptidyltransferase center. The sequence is that of Large ribosomal subunit protein uL6 from Shewanella woodyi (strain ATCC 51908 / MS32).